The sequence spans 187 residues: MASTADFKNGLVLQIDGQLWQIVEFQHVKPGKGPAFVRTKLKNVVSGKVVDKTYNAGVKVETATVDRRDATYLYRDGSDFVFMDSEDFEQHPLPEALVGRLAGFLLESMPVQIAFHDGVPLYLELPVTVELLVAHTEPGLQGDRSSAGTKPATMETGAEIQVPLFINTGDKLKVDSRDGSYLGRVNA.

The protein belongs to the elongation factor P family.

It is found in the cytoplasm. Its pathway is protein biosynthesis; polypeptide chain elongation. Involved in peptide bond synthesis. Stimulates efficient translation and peptide-bond synthesis on native or reconstituted 70S ribosomes in vitro. Probably functions indirectly by altering the affinity of the ribosome for aminoacyl-tRNA, thus increasing their reactivity as acceptors for peptidyl transferase. The chain is Elongation factor P from Mycolicibacterium gilvum (strain PYR-GCK) (Mycobacterium gilvum (strain PYR-GCK)).